The following is a 347-amino-acid chain: NADH-quinone oxidoreductase subunit H 1 (347 aa).

9 consecutive transmembrane segments (helical) span residues 14–34, 50–70, 83–103, 115–135, 161–181, 198–218, 258–278, 286–306, and 321–341; these read IMIG…AYVL, PNVV…KFVF, IFLL…AVIP, VGIL…IMGG, IGFV…TDIV, FLDW…ISAL, AICL…LPPV, VPGI…FAMV, and LGWK…AFVL.

Belongs to the complex I subunit 1 family. As to quaternary structure, NDH-1 is composed of 14 different subunits. Subunits NuoA, H, J, K, L, M, N constitute the membrane sector of the complex.

It localises to the cell inner membrane. The enzyme catalyses a quinone + NADH + 5 H(+)(in) = a quinol + NAD(+) + 4 H(+)(out). Functionally, NDH-1 shuttles electrons from NADH, via FMN and iron-sulfur (Fe-S) centers, to quinones in the respiratory chain. The immediate electron acceptor for the enzyme in this species is believed to be ubiquinone. Couples the redox reaction to proton translocation (for every two electrons transferred, four hydrogen ions are translocated across the cytoplasmic membrane), and thus conserves the redox energy in a proton gradient. This subunit may bind ubiquinone. This is NADH-quinone oxidoreductase subunit H 1 from Rhizobium meliloti (strain 1021) (Ensifer meliloti).